Reading from the N-terminus, the 124-residue chain is Large ribosomal subunit protein bL19 (124 aa).

The protein belongs to the bacterial ribosomal protein bL19 family.

Functionally, this protein is located at the 30S-50S ribosomal subunit interface and may play a role in the structure and function of the aminoacyl-tRNA binding site. This Dinoroseobacter shibae (strain DSM 16493 / NCIMB 14021 / DFL 12) protein is Large ribosomal subunit protein bL19.